The chain runs to 190 residues: Subtilisin inhibitor CLSI-II (190 aa).

Cystine bridges form between Cys44–Cys88 and Cys142–Cys149.

Belongs to the protease inhibitor I3 (leguminous Kunitz-type inhibitor) family. As to quaternary structure, forms active dimers on storage in aqueous solution, possibly through formation of an intermolecular disulfide bond. The N-terminal Asn is removed in about 50% of both the CLSI-II and CLSI-III chains.

The protein resides in the secreted. Its function is as follows. Inhibits subtilisin-type microbial serine proteases incuding proteinase K, subtilisin BPN', subtilisin Carlsberg and subtilisin E in a non-stoichiometric manner. Weakly inhibits A.oryzae protease and some metalloproteases including pronase E. Does not inhibit trypsin, chymotrypsin, S.griseus alkaline protease or A.lyticus lysyl endopeptidase. CLSI-II has a wider inhibitory specificity than CLSI-III. The chain is Subtilisin inhibitor CLSI-II from Canavalia lineata (Beach bean).